The chain runs to 454 residues: Membrane-bound lytic murein transglycosylase F (454 aa).

The N-terminal stretch at Met1 to Phe24 is a signal peptide. A non-LT domain region spans residues Tyr25–Asp265. Residues Thr266–Val454 are LT domain. The active site involves Glu311.

It in the N-terminal section; belongs to the bacterial solute-binding protein 3 family. This sequence in the C-terminal section; belongs to the transglycosylase Slt family.

It is found in the cell outer membrane. It carries out the reaction Exolytic cleavage of the (1-&gt;4)-beta-glycosidic linkage between N-acetylmuramic acid (MurNAc) and N-acetylglucosamine (GlcNAc) residues in peptidoglycan, from either the reducing or the non-reducing ends of the peptidoglycan chains, with concomitant formation of a 1,6-anhydrobond in the MurNAc residue.. In terms of biological role, murein-degrading enzyme that degrades murein glycan strands and insoluble, high-molecular weight murein sacculi, with the concomitant formation of a 1,6-anhydromuramoyl product. Lytic transglycosylases (LTs) play an integral role in the metabolism of the peptidoglycan (PG) sacculus. Their lytic action creates space within the PG sacculus to allow for its expansion as well as for the insertion of various structures such as secretion systems and flagella. This chain is Membrane-bound lytic murein transglycosylase F, found in Desulfosudis oleivorans (strain DSM 6200 / JCM 39069 / Hxd3) (Desulfococcus oleovorans).